We begin with the raw amino-acid sequence, 672 residues long: tRNA 5-methylaminomethyl-2-thiouridine biosynthesis bifunctional protein MnmC (672 aa).

The tRNA (mnm(5)s(2)U34)-methyltransferase stretch occupies residues 1 to 243 (MTSITHAELG…KREMIAGCME (243 aa)). Positions 269–672 (IGGGIASAAL…LRKGKAITEL (404 aa)) are FAD-dependent cmnm(5)s(2)U34 oxidoreductase.

In the N-terminal section; belongs to the methyltransferase superfamily. tRNA (mnm(5)s(2)U34)-methyltransferase family. It in the C-terminal section; belongs to the DAO family. FAD is required as a cofactor.

The protein localises to the cytoplasm. It carries out the reaction 5-aminomethyl-2-thiouridine(34) in tRNA + S-adenosyl-L-methionine = 5-methylaminomethyl-2-thiouridine(34) in tRNA + S-adenosyl-L-homocysteine + H(+). In terms of biological role, catalyzes the last two steps in the biosynthesis of 5-methylaminomethyl-2-thiouridine (mnm(5)s(2)U) at the wobble position (U34) in tRNA. Catalyzes the FAD-dependent demodification of cmnm(5)s(2)U34 to nm(5)s(2)U34, followed by the transfer of a methyl group from S-adenosyl-L-methionine to nm(5)s(2)U34, to form mnm(5)s(2)U34. This is tRNA 5-methylaminomethyl-2-thiouridine biosynthesis bifunctional protein MnmC from Vibrio vulnificus (strain CMCP6).